Here is a 492-residue protein sequence, read N- to C-terminus: Protein nucleotidyltransferase YdiU (492 aa).

Residues Gly88, Gly90, Arg91, Lys111, Asp123, Gly124, Arg174, and Arg181 each coordinate ATP. Asp250 acts as the Proton acceptor in catalysis. Residues Asn251 and Asp260 each coordinate Mg(2+). Asp260 contributes to the ATP binding site.

It belongs to the SELO family. Mg(2+) is required as a cofactor. Mn(2+) serves as cofactor.

The enzyme catalyses L-seryl-[protein] + ATP = 3-O-(5'-adenylyl)-L-seryl-[protein] + diphosphate. It catalyses the reaction L-threonyl-[protein] + ATP = 3-O-(5'-adenylyl)-L-threonyl-[protein] + diphosphate. The catalysed reaction is L-tyrosyl-[protein] + ATP = O-(5'-adenylyl)-L-tyrosyl-[protein] + diphosphate. It carries out the reaction L-histidyl-[protein] + UTP = N(tele)-(5'-uridylyl)-L-histidyl-[protein] + diphosphate. The enzyme catalyses L-seryl-[protein] + UTP = O-(5'-uridylyl)-L-seryl-[protein] + diphosphate. It catalyses the reaction L-tyrosyl-[protein] + UTP = O-(5'-uridylyl)-L-tyrosyl-[protein] + diphosphate. Its function is as follows. Nucleotidyltransferase involved in the post-translational modification of proteins. It can catalyze the addition of adenosine monophosphate (AMP) or uridine monophosphate (UMP) to a protein, resulting in modifications known as AMPylation and UMPylation. This Rhodopseudomonas palustris (strain ATCC BAA-98 / CGA009) protein is Protein nucleotidyltransferase YdiU.